The primary structure comprises 525 residues: Vesicular inhibitory amino acid transporter (525 aa).

Over 1–132 the chain is Cytoplasmic; the sequence is MATLLRSKLS…WNVTNAIQGM (132 aa). The tract at residues 83 to 107 is disordered; that stretch reads IHYQRGSGAPLPPSGSKDQVGGGGE. Residues 133–153 form a helical membrane-spanning segment; the sequence is FVLGLPYAILHGGYLGLFLII. The Lumenal, vesicle segment spans residues 154–204; sequence FAAVVCCYTGKILIACLYEENEDGEVVRVRDSYVAIANACCAPRFPTLGGR. Y186 bears the 3'-nitrotyrosine mark. A helical transmembrane segment spans residues 205–225; that stretch reads VVNVAQIIELVMTCILYVVVS. Over 226-265 the chain is Cytoplasmic; sequence GNLMYNSFPGLPVSQKSWSIIATAVLLPCAFLKNLKAVSK. The chain crosses the membrane as a helical span at residues 266–286; sequence FSLLCTLAHFVINILVIAYCL. At 287 to 305 the chain is on the lumenal, vesicle side; that stretch reads SRARDWAWEKVKFYIDVKK. A helical membrane pass occupies residues 306-326; the sequence is FPISIGIIVFSYTSQIFLPSL. Topologically, residues 327 to 341 are cytoplasmic; it reads EGNMQQPSEFHCMMN. A helical transmembrane segment spans residues 342-362; it reads WTHIAACVLKGLFALVAYLTW. Over 363–383 the chain is Lumenal, vesicle; it reads ADETKEVITDNLPGSIRAVVN. Residues 384–404 form a helical membrane-spanning segment; the sequence is IFLVAKALLSYPLPFFAAVEV. Topologically, residues 405-438 are cytoplasmic; sequence LEKSLFQEGSRAFFPACYSGDGRLKSWGLTLRCA. A helical transmembrane segment spans residues 439-459; that stretch reads LVVFTLLMAIYVPHFALLMGL. The Lumenal, vesicle segment spans residues 460 to 461; that stretch reads TG. A helical membrane pass occupies residues 462 to 482; that stretch reads SLTGAGLCFLLPSLFHLRLLW. Over 483-489 the chain is Cytoplasmic; sequence RKLLWHQ. The helical transmembrane segment at 490–510 threads the bilayer; the sequence is VFFDVAIFVIGGICSVSGFVH. The Lumenal, vesicle portion of the chain corresponds to 511 to 525; that stretch reads SLEGLIEAYRTNAED.

Belongs to the amino acid/polyamine transporter 2 family. As to expression, retina. Expressed throughout the horizontal cells or more specifically at the terminals.

The protein resides in the cytoplasmic vesicle membrane. It is found in the presynapse. It catalyses the reaction 4-aminobutanoate(out) + n H(+)(in) = 4-aminobutanoate(in) + n H(+)(out). The enzyme catalyses glycine(out) + n H(+)(in) = glycine(in) + n H(+)(out). The catalysed reaction is beta-alanine(out) + n H(+)(in) = beta-alanine(in) + n H(+)(out). Functionally, antiporter that exchanges vesicular protons for cytosolic 4-aminobutanoate or to a lesser extend glycine, thus allowing their secretion from nerve terminals. The transport is equally dependent on the chemical and electrical components of the proton gradient. May also transport beta-alanine. Acidification of GABAergic synaptic vesicles is a prerequisite for 4-aminobutanoate uptake. In Homo sapiens (Human), this protein is Vesicular inhibitory amino acid transporter.